Here is a 154-residue protein sequence, read N- to C-terminus: 6,7-dimethyl-8-ribityllumazine synthase (154 aa).

5-amino-6-(D-ribitylamino)uracil contacts are provided by residues Phe22, 56–58 (AFE), and 80–82 (AVI). (2S)-2-hydroxy-3-oxobutyl phosphate is bound at residue 85-86 (AT). Residue His88 is the Proton donor of the active site. A 5-amino-6-(D-ribitylamino)uracil-binding site is contributed by Phe113. Arg127 contacts (2S)-2-hydroxy-3-oxobutyl phosphate.

The protein belongs to the DMRL synthase family. Forms an icosahedral capsid composed of 60 subunits, arranged as a dodecamer of pentamers.

The enzyme catalyses (2S)-2-hydroxy-3-oxobutyl phosphate + 5-amino-6-(D-ribitylamino)uracil = 6,7-dimethyl-8-(1-D-ribityl)lumazine + phosphate + 2 H2O + H(+). It functions in the pathway cofactor biosynthesis; riboflavin biosynthesis; riboflavin from 2-hydroxy-3-oxobutyl phosphate and 5-amino-6-(D-ribitylamino)uracil: step 1/2. In terms of biological role, catalyzes the formation of 6,7-dimethyl-8-ribityllumazine by condensation of 5-amino-6-(D-ribitylamino)uracil with 3,4-dihydroxy-2-butanone 4-phosphate. This is the penultimate step in the biosynthesis of riboflavin. This chain is 6,7-dimethyl-8-ribityllumazine synthase, found in Geobacillus kaustophilus (strain HTA426).